The chain runs to 504 residues: Maturase K (504 aa).

This sequence belongs to the intron maturase 2 family. MatK subfamily.

It localises to the plastid. The protein resides in the chloroplast. Its function is as follows. Usually encoded in the trnK tRNA gene intron. Probably assists in splicing its own and other chloroplast group II introns. In Actinidia chinensis (Kiwi), this protein is Maturase K.